Reading from the N-terminus, the 219-residue chain is Dynein light chain Tctex-type 4 (219 aa).

The tract at residues 1–84 is disordered; the sequence is MACRTLPSRR…RRPSLGPVPP (84 aa). The segment covering 9–20 has biased composition (basic and acidic residues); it reads RRQEEETTKDLA. Position 64 is a phosphoserine (Ser64).

The protein belongs to the dynein light chain Tctex-type family. As to quaternary structure, interacts with ENG/endoglin, TGFBR2 and TGFBR3. Interacts with PPP1CC.

The protein resides in the cell projection. It localises to the cilium. Its subcellular location is the flagellum. The protein localises to the cytoplasmic vesicle. It is found in the secretory vesicle. The protein resides in the acrosome. It localises to the cytoplasm. Its subcellular location is the cytoskeleton. The protein localises to the cilium axoneme. It is found in the nucleus. The protein resides in the microtubule organizing center. The protein is Dynein light chain Tctex-type 4 (Dynlt4) of Mus musculus (Mouse).